The sequence spans 101 residues: Protein Tat (101 aa).

Over residues 1-10 the composition is skewed to basic and acidic residues; that stretch reads MEPVDPRLEP. Residues 1-20 form a disordered region; sequence MEPVDPRLEPWNHPGSQPKT. The interval 1 to 24 is interaction with human CREBBP; that stretch reads MEPVDPRLEPWNHPGSQPKTACNN. The transactivation stretch occupies residues 1–48; it reads MEPVDPRLEPWNHPGSQPKTACNNCYCKRCCYHCLYCFTKKGLGISYG. Residues cysteine 22, cysteine 25, and cysteine 27 each coordinate Zn(2+). Positions 22–37 are cysteine-rich; that stretch reads CNNCYCKRCCYHCLYC. Lysine 28 bears the N6-acetyllysine; by host PCAF mark. Cysteine 30, histidine 33, cysteine 34, and cysteine 37 together coordinate Zn(2+). The tract at residues 38–48 is core; the sequence is FTKKGLGISYG. Residues 48–58 show a composition bias toward basic residues; sequence GRKKRSQRRRT. Residues 48 to 101 form a disordered region; it reads GRKKRSQRRRTPQSSKSHQDLIPEQPLSQQQGDQTGQKKQKEALESKTEADPCD. The Nuclear localization signal, RNA-binding (TAR), and protein transduction signature appears at 49–57; the sequence is RKKRSQRRR. The interaction with the host capping enzyme RNGTT stretch occupies residues 49–86; sequence RKKRSQRRRTPQSSKSHQDLIPEQPLSQQQGDQTGQKK. Residues lysine 50 and lysine 51 each carry the N6-acetyllysine; by host EP300 and GCN5L2 modification. Arginine 52 is subject to Asymmetric dimethylarginine; by host PRMT6. Basic and acidic residues predominate over residues 86–101; that stretch reads KQKEALESKTEADPCD.

Belongs to the lentiviruses Tat family. Interacts with host CCNT1. Associates with the P-TEFb complex composed at least of Tat, P-TEFb (CDK9 and CCNT1), TAR RNA, RNA Pol II. Recruits the HATs CREBBP, TAF1/TFIID, EP300, PCAF and GCN5L2. Interacts with host KAT5/Tip60; this interaction targets the latter to degradation. Interacts with the host deacetylase SIRT1. Interacts with host capping enzyme RNGTT; this interaction stimulates RNGTT. Binds to host KDR, and to the host integrins ITGAV/ITGB3 and ITGA5/ITGB1. Interacts with host KPNB1/importin beta-1 without previous binding to KPNA1/importin alpha-1. Interacts with EIF2AK2. Interacts with host nucleosome assembly protein NAP1L1; this interaction may be required for the transport of Tat within the nucleus, since the two proteins interact at the nuclear rim. Interacts with host C1QBP/SF2P32; this interaction involves lysine-acetylated Tat. Interacts with the host chemokine receptors CCR2, CCR3 and CXCR4. Interacts with host DPP4/CD26; this interaction may trigger an anti-proliferative effect. Interacts with host LDLR. Interacts with the host extracellular matrix metalloproteinase MMP1. Interacts with host PRMT6; this interaction mediates Tat's methylation. Interacts with, and is ubiquitinated by MDM2/Hdm2. Interacts with host PSMC3 and HTATIP2. Interacts with STAB1; this interaction may overcome SATB1-mediated repression of IL2 and IL2RA (interleukin) in T cells by binding to the same domain than HDAC1. Interacts (when acetylated) with human CDK13, thereby increasing HIV-1 mRNA splicing and promoting the production of the doubly spliced HIV-1 protein Nef. Interacts with host TBP; this interaction modulates the activity of transcriptional pre-initiation complex. Interacts with host RELA. Interacts with host PLSCR1; this interaction negatively regulates Tat transactivation activity by altering its subcellular distribution. Post-translationally, asymmetrical arginine methylation by host PRMT6 seems to diminish the transactivation capacity of Tat and affects the interaction with host CCNT1. Acetylation by EP300, CREBBP, GCN5L2/GCN5 and PCAF regulates the transactivation activity of Tat. EP300-mediated acetylation of Lys-50 promotes dissociation of Tat from the TAR RNA through the competitive binding to PCAF's bromodomain. In addition, the non-acetylated Tat's N-terminus can also interact with PCAF. PCAF-mediated acetylation of Lys-28 enhances Tat's binding to CCNT1. Lys-50 is deacetylated by SIRT1. In terms of processing, polyubiquitination by host MDM2 does not target Tat to degradation, but activates its transactivation function and fosters interaction with CCNT1 and TAR RNA. Post-translationally, phosphorylated by EIF2AK2 on serine and threonine residues adjacent to the basic region important for TAR RNA binding and function. Phosphorylation of Tat by EIF2AK2 is dependent on the prior activation of EIF2AK2 by dsRNA.

Its subcellular location is the host nucleus. It localises to the host nucleolus. The protein resides in the host cytoplasm. It is found in the secreted. Its function is as follows. Transcriptional activator that increases RNA Pol II processivity, thereby increasing the level of full-length viral transcripts. Recognizes a hairpin structure at the 5'-LTR of the nascent viral mRNAs referred to as the transactivation responsive RNA element (TAR) and recruits the cyclin T1-CDK9 complex (P-TEFb complex) that will in turn hyperphosphorylate the RNA polymerase II to allow efficient elongation. The CDK9 component of P-TEFb and other Tat-activated kinases hyperphosphorylate the C-terminus of RNA Pol II that becomes stabilized and much more processive. Other factors such as HTATSF1/Tat-SF1, SUPT5H/SPT5, and HTATIP2 are also important for Tat's function. Besides its effect on RNA Pol II processivity, Tat induces chromatin remodeling of proviral genes by recruiting the histone acetyltransferases (HATs) CREBBP, EP300 and PCAF to the chromatin. This also contributes to the increase in proviral transcription rate, especially when the provirus integrates in transcriptionally silent region of the host genome. To ensure maximal activation of the LTR, Tat mediates nuclear translocation of NF-kappa-B by interacting with host RELA. Through its interaction with host TBP, Tat may also modulate transcription initiation. Tat can reactivate a latently infected cell by penetrating in it and transactivating its LTR promoter. In the cytoplasm, Tat is thought to act as a translational activator of HIV-1 mRNAs. Extracellular circulating Tat can be endocytosed by surrounding uninfected cells via the binding to several surface receptors such as CD26, CXCR4, heparan sulfate proteoglycans (HSPG) or LDLR. Neurons are rarely infected, but they internalize Tat via their LDLR. Through its interaction with nuclear HATs, Tat is potentially able to control the acetylation-dependent cellular gene expression. Modulates the expression of many cellular genes involved in cell survival, proliferation or in coding for cytokines or cytokine receptors. Tat plays a role in T-cell and neurons apoptosis. Tat induced neurotoxicity and apoptosis probably contribute to neuroAIDS. Circulating Tat also acts as a chemokine-like and/or growth factor-like molecule that binds to specific receptors on the surface of the cells, affecting many cellular pathways. In the vascular system, Tat binds to ITGAV/ITGB3 and ITGA5/ITGB1 integrins dimers at the surface of endothelial cells and competes with bFGF for heparin-binding sites, leading to an excess of soluble bFGF. The chain is Protein Tat from Homo sapiens (Human).